The primary structure comprises 349 residues: Heat-inducible transcription repressor HrcA (349 aa).

This sequence belongs to the HrcA family.

Its function is as follows. Negative regulator of class I heat shock genes (grpE-dnaK-dnaJ and groELS operons). Prevents heat-shock induction of these operons. This chain is Heat-inducible transcription repressor HrcA, found in Mycoplasmoides gallisepticum (strain R(low / passage 15 / clone 2)) (Mycoplasma gallisepticum).